The sequence spans 374 residues: Probable phosphoserine aminotransferase (374 aa).

Arg-48 serves as a coordination point for L-glutamate. Pyridoxal 5'-phosphate is bound by residues 82–83, Trp-110, Thr-160, Asp-183, and Gln-206; that span reads AS. Lys-207 carries the N6-(pyridoxal phosphate)lysine modification. Residue 248 to 249 participates in pyridoxal 5'-phosphate binding; it reads NT.

It belongs to the class-V pyridoxal-phosphate-dependent aminotransferase family. SerC subfamily. Homodimer. Pyridoxal 5'-phosphate serves as cofactor.

It catalyses the reaction O-phospho-L-serine + 2-oxoglutarate = 3-phosphooxypyruvate + L-glutamate. The catalysed reaction is 4-(phosphooxy)-L-threonine + 2-oxoglutarate = (R)-3-hydroxy-2-oxo-4-phosphooxybutanoate + L-glutamate. It participates in amino-acid biosynthesis; L-serine biosynthesis; L-serine from 3-phospho-D-glycerate: step 2/3. The protein operates within cofactor biosynthesis; pyridoxine 5'-phosphate biosynthesis; pyridoxine 5'-phosphate from D-erythrose 4-phosphate: step 3/5. In terms of biological role, catalyzes the reversible conversion of 3-phosphohydroxypyruvate to phosphoserine and of 3-hydroxy-2-oxo-4-phosphonooxybutanoate to phosphohydroxythreonine. This Dictyostelium discoideum (Social amoeba) protein is Probable phosphoserine aminotransferase (serC).